Consider the following 377-residue polypeptide: 3-dehydroquinate synthase (377 aa).

Residues 115 to 119 (GVIGD), 139 to 140 (TS), Lys-152, and Lys-161 contribute to the NAD(+) site. 3 residues coordinate Zn(2+): Glu-194, His-256, and His-275.

It belongs to the sugar phosphate cyclases superfamily. Dehydroquinate synthase family. NAD(+) is required as a cofactor. The cofactor is Co(2+). Requires Zn(2+) as cofactor.

It localises to the cytoplasm. The enzyme catalyses 7-phospho-2-dehydro-3-deoxy-D-arabino-heptonate = 3-dehydroquinate + phosphate. It functions in the pathway metabolic intermediate biosynthesis; chorismate biosynthesis; chorismate from D-erythrose 4-phosphate and phosphoenolpyruvate: step 2/7. Catalyzes the conversion of 3-deoxy-D-arabino-heptulosonate 7-phosphate (DAHP) to dehydroquinate (DHQ). This chain is 3-dehydroquinate synthase, found in Agrobacterium fabrum (strain C58 / ATCC 33970) (Agrobacterium tumefaciens (strain C58)).